The chain runs to 853 residues: uncharacterized protein (853 aa).

Basic residues predominate over residues 1 to 11; that stretch reads MAPRKKAVTKK. Disordered regions lie at residues 1–448, 485–621, and 635–658; these read MAPR…SNNV, IAPT…NYFN, and ENYK…NEDE. The span at 20–37 shows a compositional bias: acidic residues; sequence IEEEIIEEPVDEIVESDG. Over residues 42-55 the composition is skewed to basic residues; sequence NKKKGKRKSSKKSK. The span at 60 to 74 shows a compositional bias: acidic residues; that stretch reads ENVEEEEQDQEEEEE. Basic and acidic residues predominate over residues 75–87; that stretch reads GNKKQKEENDADK. Residues 88–107 are compositionally biased toward basic residues; it reads KSRKHDEHRKKRDSKNRRSH. A compositionally biased stretch (acidic residues) spans 112-121; the sequence is ENEEGEEDDE. The segment covering 124–139 has biased composition (basic residues); the sequence is RKKRRRRKHREKRKKN. Acidic residues-rich tracts occupy residues 143 to 166 and 179 to 197; these read EEEE…EEDV and DFDE…EEEQ. Positions 216 to 228 are enriched in basic residues; that stretch reads DKSKKRKSKKKKR. Composition is skewed to acidic residues over residues 232–260 and 268–286; these read DDDD…EDVN and KEEE…DEEK. Basic and acidic residues-rich tracts occupy residues 287–361, 370–400, and 411–425; these read QSEN…RDHY, SRDH…RDHY, and RSRD…DEKS. Low complexity-rich tracts occupy residues 426–447, 510–613, and 636–652; these read SSSN…SSNN, NNDN…SNSS, and NYKN…NNNK.

This is an uncharacterized protein from Dictyostelium discoideum (Social amoeba).